We begin with the raw amino-acid sequence, 585 residues long: Arginine--tRNA ligase (585 aa).

The short motif at 126–136 is the 'HIGH' region element; the sequence is PNIAKEMHVGH.

This sequence belongs to the class-I aminoacyl-tRNA synthetase family. Monomer.

It is found in the cytoplasm. The catalysed reaction is tRNA(Arg) + L-arginine + ATP = L-arginyl-tRNA(Arg) + AMP + diphosphate. The protein is Arginine--tRNA ligase of Trichodesmium erythraeum (strain IMS101).